We begin with the raw amino-acid sequence, 89 residues long: Small ribosomal subunit protein uS14A (89 aa).

It belongs to the universal ribosomal protein uS14 family. As to quaternary structure, part of the 30S ribosomal subunit. Contacts proteins S3 and S10.

Its function is as follows. Binds 16S rRNA, required for the assembly of 30S particles and may also be responsible for determining the conformation of the 16S rRNA at the A site. This chain is Small ribosomal subunit protein uS14A, found in Listeria welshimeri serovar 6b (strain ATCC 35897 / DSM 20650 / CCUG 15529 / CIP 8149 / NCTC 11857 / SLCC 5334 / V8).